Reading from the N-terminus, the 436-residue chain is GTPase Der (436 aa).

2 consecutive EngA-type G domains span residues 4–167 and 175–351; these read PTVA…PVEE and IRFS…ESQN. Residues 10–17, 57–61, 119–122, 181–188, 229–233, and 294–297 contribute to the GTP site; these read GRPNVGKS, DTGGI, NKVD, DTAGM, and NKWD. One can recognise a KH-like domain in the interval 352 to 436; the sequence is KRIPSAVLND…PIHLIARKRK (85 aa).

Belongs to the TRAFAC class TrmE-Era-EngA-EngB-Septin-like GTPase superfamily. EngA (Der) GTPase family. In terms of assembly, associates with the 50S ribosomal subunit.

In terms of biological role, GTPase that plays an essential role in the late steps of ribosome biogenesis. The chain is GTPase Der from Streptococcus pyogenes serotype M5 (strain Manfredo).